Consider the following 375-residue polypeptide: DNA replication and repair protein RecF (375 aa).

30-37 (GENAQGKT) serves as a coordination point for ATP.

Belongs to the RecF family.

It is found in the cytoplasm. Functionally, the RecF protein is involved in DNA metabolism; it is required for DNA replication and normal SOS inducibility. RecF binds preferentially to single-stranded, linear DNA. It also seems to bind ATP. The sequence is that of DNA replication and repair protein RecF from Bacillus cereus (strain G9842).